The chain runs to 305 residues: NADH-cytochrome b5 reductase 1 (305 aa).

Residues 8 to 28 traverse the membrane as a helical segment; sequence VLLASLGVGLFTLFGLALGTY. Residues 44 to 156 enclose the FAD-binding FR-type domain; the sequence is DEKYLLRLLD…RGPSGLLSYA (113 aa). Residues 136–166 and 175–210 each bind FAD; these read DSLKIGDVVEFRGPSGLLSYAGKGNFNIQPN and VAKKLGMIAGGTGITPMLQLIRAILKVPEDPTQCFL.

It belongs to the flavoprotein pyridine nucleotide cytochrome reductase family. FAD is required as a cofactor.

The protein localises to the membrane. It catalyses the reaction 2 Fe(III)-[cytochrome b5] + NADH = 2 Fe(II)-[cytochrome b5] + NAD(+) + H(+). NADH-cytochrome b5 reductases are involved in desaturation and elongation of fatty acids, cholesterol biosynthesis, drug metabolism, and, in erythrocyte, methemoglobin reduction. This is NADH-cytochrome b5 reductase 1 (Cyb5r1) from Rattus norvegicus (Rat).